The sequence spans 241 residues: Large ribosomal subunit protein uL2 (241 aa).

The segment covering 1 to 12 (MGKRLISQRRGR) has biased composition (basic residues). Disordered stretches follow at residues 1-21 (MGKRLISQRRGRGTPTYRSAS) and 200-241 (AVDH…GKRR).

Belongs to the universal ribosomal protein uL2 family. Part of the 50S ribosomal subunit. Forms a bridge to the 30S subunit in the 70S ribosome.

In terms of biological role, one of the primary rRNA binding proteins. Required for association of the 30S and 50S subunits to form the 70S ribosome, for tRNA binding and peptide bond formation. It has been suggested to have peptidyltransferase activity; this is somewhat controversial. Makes several contacts with the 16S rRNA in the 70S ribosome. This chain is Large ribosomal subunit protein uL2, found in Methanothermobacter thermautotrophicus (strain ATCC 29096 / DSM 1053 / JCM 10044 / NBRC 100330 / Delta H) (Methanobacterium thermoautotrophicum).